Consider the following 297-residue polypeptide: ABSCISIC ACID-INSENSITIVE 5-like protein 2 (297 aa).

A phosphoserine mark is found at serine 21, serine 43, and serine 81. Disordered regions lie at residues 100–119 (IQQN…QPTL) and 138–157 (IPGS…SGAG). Threonine 118 bears the Phosphothreonine mark. Over residues 146–157 (PVGGGSAGSGAG) the composition is skewed to gly residues. Positions 225–288 (VERRQKRMIK…SVPPPDPKRQ (64 aa)) constitute a bZIP domain. The tract at residues 227-246 (RRQKRMIKNRESAARSRARK) is basic motif. The leucine-zipper stretch occupies residues 253–267 (LEIKVSRLEEENERL). A disordered region spans residues 272 to 297 (EVEKILPSVPPPDPKRQLRRTSSAPF).

This sequence belongs to the bZIP family. ABI5 subfamily. In terms of assembly, DNA-binding heterodimer with ABI5/DPBF1, DPBF2 or EEL/DPBF4. Interacts with the AFP proteins AFP1, AFP2, AFP3 and AFP4. Predominantly expressed in seeds.

Its subcellular location is the nucleus. In terms of biological role, binds to the embryo specification element and the ABA-responsive element (ABRE) of the Dc3 gene promoter. Could participate in abscisic acid-regulated gene expression during seed development. The sequence is that of ABSCISIC ACID-INSENSITIVE 5-like protein 2 (DPBF3) from Arabidopsis thaliana (Mouse-ear cress).